The chain runs to 700 residues: UvrABC system protein C (700 aa).

The GIY-YIG domain occupies 11–90 (TTPGVYLYKD…IKKHRPRYNI (80 aa)). The UVR domain occupies 200 to 235 (TELIDMLRADMQAASDALEFEEAALLRDQLQAVERT).

This sequence belongs to the UvrC family. As to quaternary structure, interacts with UvrB in an incision complex.

It is found in the cytoplasm. In terms of biological role, the UvrABC repair system catalyzes the recognition and processing of DNA lesions. UvrC both incises the 5' and 3' sides of the lesion. The N-terminal half is responsible for the 3' incision and the C-terminal half is responsible for the 5' incision. The chain is UvrABC system protein C from Oleidesulfovibrio alaskensis (strain ATCC BAA-1058 / DSM 17464 / G20) (Desulfovibrio alaskensis).